The primary structure comprises 235 residues: Small ribosomal subunit protein uS3 (235 aa).

Positions 39–107 (VRKFLNKELA…PAQINIAEVK (69 aa)) constitute a KH type-2 domain. Positions 215 to 235 (AQPEQQPADKPKKAPRGKGRK) are disordered.

It belongs to the universal ribosomal protein uS3 family. As to quaternary structure, part of the 30S ribosomal subunit. Forms a tight complex with proteins S10 and S14.

Binds the lower part of the 30S subunit head. Binds mRNA in the 70S ribosome, positioning it for translation. The chain is Small ribosomal subunit protein uS3 from Pasteurella multocida (strain Pm70).